The following is a 578-amino-acid chain: Longifolene synthase (578 aa).

3 residues coordinate Mg(2+): D331, D335, and D475. The DDXXD motif motif lies at 331–335 (DDLYD).

Belongs to the terpene synthase family. Tpsd subfamily. The cofactor is Mg(2+). It depends on Mn(2+) as a cofactor.

It carries out the reaction (2E,6E)-farnesyl diphosphate = longifolene + diphosphate. The protein operates within sesquiterpene biosynthesis. Its pathway is terpene metabolism; oleoresin biosynthesis. Terpene synthase (TPS) involved in the biosynthesis of sesquiterpene natural products included in conifer oleoresin secretions and volatile emissions; these compounds contribute to biotic and abiotic stress defense against herbivores and pathogens. Catalyzes the conversion of (2E,6E)-farnesyl diphosphate (FPP) to longifolene. This Picea engelmannii x Picea glauca (Hybrid white spruce) protein is Longifolene synthase.